The following is a 339-amino-acid chain: Fructose-1,6-bisphosphatase isozyme 2 (339 aa).

The tract at residues 3–10 (DRSPFETD) is important for interaction with ALDOA. AMP-binding positions include V18 and 28–32 (TGELT). Mg(2+) contacts are provided by D69 and E98. 113-114 (KY) serves as a coordination point for AMP. Positions 119, 121, and 122 each coordinate Mg(2+). D122 is a substrate binding site. Position 141 (R141) interacts with AMP. The short motif at 204 to 208 (KKKGK) is the Nuclear localization signal element. Position 213–216 (213–216 (NEGY)) interacts with substrate. Y216 and Y219 each carry phosphotyrosine. Substrate contacts are provided by residues 245-249 (YVGSM), Y265, and K275. E281 provides a ligand contact to Mg(2+).

Belongs to the FBPase class 1 family. In terms of assembly, homotetramer. Interacts with ALDOA; the interaction blocks inhibition by physiological concentrations of AMP and reduces inhibition by Ca(2+). Interacts with alpha-actinin and F-actin. Requires Mg(2+) as cofactor. Expressed in muscle, intestine, brain and placenta and very weakly in liver.

The protein localises to the cell junction. It is found in the cytoplasm. It localises to the nucleus. Its subcellular location is the myofibril. The protein resides in the sarcomere. The protein localises to the z line. The catalysed reaction is beta-D-fructose 1,6-bisphosphate + H2O = beta-D-fructose 6-phosphate + phosphate. Its pathway is carbohydrate biosynthesis; gluconeogenesis. Its activity is regulated as follows. Subject to complex allosteric regulation. The enzyme can assume an active R-state, or an inactive T-state. Intermediate conformations may exist. AMP acts as an allosteric inhibitor. Fructose 2,6-bisphosphate acts as a competitive inhibitor. Strongly inhibited by Ca(2+). Its function is as follows. Catalyzes the hydrolysis of fructose 1,6-bisphosphate to fructose 6-phosphate in the presence of divalent cations and probably participates in glycogen synthesis from carbohydrate precursors, such as lactate. This Mus musculus (Mouse) protein is Fructose-1,6-bisphosphatase isozyme 2 (Fbp2).